The following is a 218-amino-acid chain: Large ribosomal subunit protein uL3 (218 aa).

The segment at 124-162 (KRHGFSRGPMTHGSKNHREPGSTGAGTTPGRIYPGKRMA) is disordered.

The protein belongs to the universal ribosomal protein uL3 family. As to quaternary structure, part of the 50S ribosomal subunit. Forms a cluster with proteins L14 and L19.

Functionally, one of the primary rRNA binding proteins, it binds directly near the 3'-end of the 23S rRNA, where it nucleates assembly of the 50S subunit. The sequence is that of Large ribosomal subunit protein uL3 from Synechococcus sp. (strain CC9605).